The chain runs to 816 residues: Leucine--tRNA ligase (816 aa).

Positions serine 40 to histidine 51 match the 'HIGH' region motif. Residues lysine 576–serine 580 carry the 'KMSKS' region motif. An ATP-binding site is contributed by lysine 579.

Belongs to the class-I aminoacyl-tRNA synthetase family.

The protein resides in the cytoplasm. It catalyses the reaction tRNA(Leu) + L-leucine + ATP = L-leucyl-tRNA(Leu) + AMP + diphosphate. This Clostridium perfringens (strain SM101 / Type A) protein is Leucine--tRNA ligase.